The chain runs to 102 residues: uncharacterized protein (102 aa).

This is an uncharacterized protein from Bacillus subtilis (strain 168).